Here is a 64-residue protein sequence, read N- to C-terminus: Cytochrome c oxidase subunit 2 (64 aa).

The Mitochondrial intermembrane segment spans residues 1-14 (MAHPSQLGFQDAAS). The chain crosses the membrane as a helical span at residues 15-45 (PVMEELXHFHDHTLMIVFLISTLVXYIIVAM). Over 46-64 (VSTKLTNKYVLDSQEIEIV) the chain is Mitochondrial matrix.

It belongs to the cytochrome c oxidase subunit 2 family. Component of the cytochrome c oxidase (complex IV, CIV), a multisubunit enzyme composed of 14 subunits. The complex is composed of a catalytic core of 3 subunits MT-CO1, MT-CO2 and MT-CO3, encoded in the mitochondrial DNA, and 11 supernumerary subunits COX4I, COX5A, COX5B, COX6A, COX6B, COX6C, COX7A, COX7B, COX7C, COX8 and NDUFA4, which are encoded in the nuclear genome. The complex exists as a monomer or a dimer and forms supercomplexes (SCs) in the inner mitochondrial membrane with NADH-ubiquinone oxidoreductase (complex I, CI) and ubiquinol-cytochrome c oxidoreductase (cytochrome b-c1 complex, complex III, CIII), resulting in different assemblies (supercomplex SCI(1)III(2)IV(1) and megacomplex MCI(2)III(2)IV(2)). Found in a complex with TMEM177, COA6, COX18, COX20, SCO1 and SCO2. Interacts with TMEM177 in a COX20-dependent manner. Interacts with COX20. Interacts with COX16. Cu cation serves as cofactor.

The protein localises to the mitochondrion inner membrane. It catalyses the reaction 4 Fe(II)-[cytochrome c] + O2 + 8 H(+)(in) = 4 Fe(III)-[cytochrome c] + 2 H2O + 4 H(+)(out). In terms of biological role, component of the cytochrome c oxidase, the last enzyme in the mitochondrial electron transport chain which drives oxidative phosphorylation. The respiratory chain contains 3 multisubunit complexes succinate dehydrogenase (complex II, CII), ubiquinol-cytochrome c oxidoreductase (cytochrome b-c1 complex, complex III, CIII) and cytochrome c oxidase (complex IV, CIV), that cooperate to transfer electrons derived from NADH and succinate to molecular oxygen, creating an electrochemical gradient over the inner membrane that drives transmembrane transport and the ATP synthase. Cytochrome c oxidase is the component of the respiratory chain that catalyzes the reduction of oxygen to water. Electrons originating from reduced cytochrome c in the intermembrane space (IMS) are transferred via the dinuclear copper A center (CU(A)) of subunit 2 and heme A of subunit 1 to the active site in subunit 1, a binuclear center (BNC) formed by heme A3 and copper B (CU(B)). The BNC reduces molecular oxygen to 2 water molecules using 4 electrons from cytochrome c in the IMS and 4 protons from the mitochondrial matrix. The chain is Cytochrome c oxidase subunit 2 (mt-co2) from Scaphirhynchus platorynchus (Shovelnose sturgeon).